A 444-amino-acid polypeptide reads, in one-letter code: Phosphoglucosamine mutase (444 aa).

The Phosphoserine intermediate role is filled by serine 102. Mg(2+)-binding residues include serine 102, aspartate 241, aspartate 243, and aspartate 245. A Phosphoserine modification is found at serine 102.

Belongs to the phosphohexose mutase family. Mg(2+) serves as cofactor. Activated by phosphorylation.

It carries out the reaction alpha-D-glucosamine 1-phosphate = D-glucosamine 6-phosphate. In terms of biological role, catalyzes the conversion of glucosamine-6-phosphate to glucosamine-1-phosphate. The chain is Phosphoglucosamine mutase from Pasteurella multocida (strain Pm70).